Here is a 226-residue protein sequence, read N- to C-terminus: ATP synthase F(0) complex subunit a (226 aa).

5 consecutive transmembrane segments (helical) span residues 9–29 (FITP…FPSL), 68–88 (WTLM…LGLL), 97–117 (QLSM…ITGF), 138–158 (IPML…ALAV), and 184–204 (ISPT…ILEF).

The protein belongs to the ATPase A chain family. In terms of assembly, component of the ATP synthase complex composed at least of ATP5F1A/subunit alpha, ATP5F1B/subunit beta, ATP5MC1/subunit c (homooctomer), MT-ATP6/subunit a, MT-ATP8/subunit 8, ATP5ME/subunit e, ATP5MF/subunit f, ATP5MG/subunit g, ATP5MK/subunit k, ATP5MJ/subunit j, ATP5F1C/subunit gamma, ATP5F1D/subunit delta, ATP5F1E/subunit epsilon, ATP5PF/subunit F6, ATP5PB/subunit b, ATP5PD/subunit d, ATP5PO/subunit OSCP. ATP synthase complex consists of a soluble F(1) head domain (subunits alpha(3) and beta(3)) - the catalytic core - and a membrane F(0) domain - the membrane proton channel (subunits c, a, 8, e, f, g, k and j). These two domains are linked by a central stalk (subunits gamma, delta, and epsilon) rotating inside the F1 region and a stationary peripheral stalk (subunits F6, b, d, and OSCP). Interacts with DNAJC30; interaction is direct.

It is found in the mitochondrion inner membrane. The enzyme catalyses H(+)(in) = H(+)(out). Its function is as follows. Subunit a, of the mitochondrial membrane ATP synthase complex (F(1)F(0) ATP synthase or Complex V) that produces ATP from ADP in the presence of a proton gradient across the membrane which is generated by electron transport complexes of the respiratory chain. ATP synthase complex consist of a soluble F(1) head domain - the catalytic core - and a membrane F(1) domain - the membrane proton channel. These two domains are linked by a central stalk rotating inside the F(1) region and a stationary peripheral stalk. During catalysis, ATP synthesis in the catalytic domain of F(1) is coupled via a rotary mechanism of the central stalk subunits to proton translocation. With the subunit c (ATP5MC1), forms the proton-conducting channel in the F(0) domain, that contains two crucial half-channels (inlet and outlet) that facilitate proton movement from the mitochondrial intermembrane space (IMS) into the matrix. Protons are taken up via the inlet half-channel and released through the outlet half-channel, following a Grotthuss mechanism. The protein is ATP synthase F(0) complex subunit a of Capra hircus (Goat).